Consider the following 267-residue polypeptide: MSIEYSVIVPAYHEKLNIKPLTTRLFAGMSPEMAKKTELIFVDDNSQDGSVEEVDALAHQGYNVRIIVRTNERGLSSAVLKGFYEAKGQYLVCMDADLQHPPETVPKLFESLHDHAFTLGTRYAPGVGIDKDWPMYRRVISSTARMMARPLTIASDPMSGFFGLQKKYLENCNPRDINSQGFKIALELLAKLPLPRDPRVAIGEVPFTFGVRTEGESKLSGKVIIQYLQQLKELYVFKFGANNLILFITFWSILFFYVCYQLYHLVF.

An N-acetylserine modification is found at serine 2. At 2-238 (SIEYSVIVPA…QQLKELYVFK (237 aa)) the chain is on the cytoplasmic side. Positions 10, 12, 14, 42, 44, 95, 96, 97, 99, and 122 each coordinate GDP-alpha-D-mannose. Residues aspartate 97 and glutamine 99 each contribute to the Mg(2+) site. Mn(2+) is bound by residues aspartate 97 and glutamine 99. Residue serine 141 is modified to Phosphoserine; by PKA. The GDP-alpha-D-mannose site is built by lysine 183, arginine 212, and lysine 218. The chain crosses the membrane as a helical; Anchor for type IV membrane protein span at residues 239 to 259 (FGANNLILFITFWSILFFYVC). Over 260-267 (YQLYHLVF) the chain is Lumenal.

Belongs to the glycosyltransferase 2 family. In terms of assembly, interacts with the C-terminus of SAC1, thereby sequestering it to the endoplasmic reticulum in exponentially growing cells. Under nutrient limitation conditions, this interaction is rapidly abolished. Requires Mg(2+) as cofactor. Mn(2+) is required as a cofactor. The cofactor is Ca(2+).

It is found in the endoplasmic reticulum membrane. The enzyme catalyses a di-trans,poly-cis-dolichyl phosphate + GDP-alpha-D-mannose = a di-trans,poly-cis-dolichyl beta-D-mannosyl phosphate + GDP. It functions in the pathway protein modification; protein glycosylation. With respect to regulation, inhibited by acetylsalicylic acid (aspirin). Functionally, transfers mannose from GDP-mannose to dolichol monophosphate to form dolichol phosphate mannose (Dol-P-Man) which is the mannosyl donor in pathways leading to N-glycosylation, glycosyl phosphatidylinositol membrane anchoring, and O-mannosylation of proteins. The chain is Dolichol-phosphate mannosyltransferase from Saccharomyces cerevisiae (strain ATCC 204508 / S288c) (Baker's yeast).